The chain runs to 431 residues: MRIVPFGAAREVTGSAHLLLAGGRRVLLDCGMFQGKEEARNHAPFGFDPKEVDAVLLTHAHLDHVGRLPKLFREGYRGPVYATRATVLLMEIVLEDALKVMDEPFFGPEDVEEALGHLRPLEYGEWLRLGALSLAFGQAGHLPGSAFVVAQGEGRTLVYSGDLGNREKDVLPDPSLPPLADLVLAEGTYGDRPHRPYRETVREFLEILEKTLSQGGKVLIPTFAVERAQEILYVLYTHGHRLPRAPIYLDSPMAGRVLSLYPRLVRYFSEEVQAHFLQGKNPFRPAGLEVVEHTEASKALNRAPGPMVVLAGSGMLAGGRILHHLKHGLSDPRNALVFVGYQPQGGLGAEIIARPPAVRILGEEVPLRASVHTLGGFSGHAGQDELLDWLQGEPRVVLVHGEEEKLLALGKLLALRGQEVSLARFGEGVPV.

Residues histidine 59, histidine 61, aspartate 63, histidine 64, histidine 141, aspartate 162, and histidine 400 each contribute to the Zn(2+) site.

The protein belongs to the metallo-beta-lactamase superfamily. RNA-metabolizing metallo-beta-lactamase-like family. As to quaternary structure, monomer. The cofactor is Zn(2+).

Its subcellular location is the cytoplasm. Inhibited by cadmium, cobalt, manganese, magnesium, calcium and nickel ions. Functionally, has endoribonuclease activity towards 23S and 16S rRNA (in vitro). The protein is Ribonuclease TTHA0252 of Thermus thermophilus (strain ATCC 27634 / DSM 579 / HB8).